We begin with the raw amino-acid sequence, 119 residues long: Beta-2-microglobulin (119 aa).

A signal peptide spans 1 to 20; sequence MARFVVAALLVLLSLSGLEA. The region spanning 25–114 is the Ig-like C1-type domain; sequence PKIQVYSRHP…MTFPAPKTVK (90 aa). Cys45 and Cys100 are disulfide-bonded.

This sequence belongs to the beta-2-microglobulin family. In terms of assembly, heterodimer of an alpha chain and a beta chain. Beta-2-microglobulin is the beta-chain of major histocompatibility complex class I molecules.

The protein resides in the secreted. Its function is as follows. Component of the class I major histocompatibility complex (MHC). Involved in the presentation of peptide antigens to the immune system. The sequence is that of Beta-2-microglobulin (B2M) from Pithecia irrorata (Gray monk saki).